A 505-amino-acid polypeptide reads, in one-letter code: Lysine--tRNA ligase 1 (505 aa).

Residues D415 and E422 each coordinate Mg(2+).

Belongs to the class-II aminoacyl-tRNA synthetase family. As to quaternary structure, homodimer. It depends on Mg(2+) as a cofactor.

It is found in the cytoplasm. It catalyses the reaction tRNA(Lys) + L-lysine + ATP = L-lysyl-tRNA(Lys) + AMP + diphosphate. This is Lysine--tRNA ligase 1 (lysS1) from Mycobacterium bovis (strain ATCC BAA-935 / AF2122/97).